Consider the following 326-residue polypeptide: MILATKVFFTSFVFGFILFPYFIKLLKKISKDGQPIRSCGPESHLITKKNVPPMGGIIILISSLLPILLWAQLTPEILLLILITLFFALLGFIDDYLKLKTNHYRGLSAKTKILIQFIVALVGVFILKLYSAECFTKTSLFKGVIIDFGYLYVPFAAFVIVGSSNAVNLTDGLDGLAATQVITSFAFLGLIAYITQADMNITLFCIAFIGAILSFLWFNTHPAKIFMGDVGSLSVGAALGLTSVLIKREMLFAIIGIIFVIETLSVIIQISYFKYTKFKYGEGKRVFLMAPIHHHFEKKRWSENVIVMKFWIISIICSVFTITFLL.

Transmembrane regions (helical) follow at residues 2 to 22, 51 to 71, 73 to 93, 113 to 133, 143 to 163, 175 to 195, 199 to 219, 225 to 245, 250 to 270, and 305 to 325; these read ILAT…FPYF, VPPM…LLWA, LTPE…LGFI, ILIQ…YSAE, GVII…IVGS, GLAA…AYIT, MNIT…LWFN, IFMG…TSVL, MLFA…IIQI, and VIVM…ITFL.

This sequence belongs to the glycosyltransferase 4 family. MraY subfamily. It depends on Mg(2+) as a cofactor.

It is found in the cell membrane. It carries out the reaction UDP-N-acetyl-alpha-D-muramoyl-L-alanyl-gamma-D-glutamyl-meso-2,6-diaminopimeloyl-D-alanyl-D-alanine + di-trans,octa-cis-undecaprenyl phosphate = di-trans,octa-cis-undecaprenyl diphospho-N-acetyl-alpha-D-muramoyl-L-alanyl-D-glutamyl-meso-2,6-diaminopimeloyl-D-alanyl-D-alanine + UMP. The protein operates within cell wall biogenesis; peptidoglycan biosynthesis. In terms of biological role, catalyzes the initial step of the lipid cycle reactions in the biosynthesis of the cell wall peptidoglycan: transfers peptidoglycan precursor phospho-MurNAc-pentapeptide from UDP-MurNAc-pentapeptide onto the lipid carrier undecaprenyl phosphate, yielding undecaprenyl-pyrophosphoryl-MurNAc-pentapeptide, known as lipid I. This Wolbachia pipientis wMel protein is Phospho-N-acetylmuramoyl-pentapeptide-transferase.